The chain runs to 163 residues: Nucleotide-binding protein MUL_0671 (163 aa).

Belongs to the YajQ family.

Functionally, nucleotide-binding protein. The chain is Nucleotide-binding protein MUL_0671 from Mycobacterium ulcerans (strain Agy99).